Here is a 571-residue protein sequence, read N- to C-terminus: Penicillin-binding protein activator LpoA (571 aa).

The first 26 residues, methionine 1–glycine 26, serve as a signal peptide directing secretion. Cysteine 27 carries the N-palmitoyl cysteine lipid modification. Cysteine 27 is lipidated: S-diacylglycerol cysteine.

It belongs to the LpoA family. Interacts with PBP1a.

It is found in the cell outer membrane. Its function is as follows. Regulator of peptidoglycan synthesis that is essential for the function of penicillin-binding protein 1A (PBP1a). The sequence is that of Penicillin-binding protein activator LpoA from Pasteurella multocida (strain Pm70).